We begin with the raw amino-acid sequence, 154 residues long: Small ribosomal subunit protein uS9 (154 aa).

Positions 133 to 154 are disordered; the sequence is RAKESKKYGLKKARKAPQYSKR. The span at 140–154 shows a compositional bias: basic residues; it reads YGLKKARKAPQYSKR.

It belongs to the universal ribosomal protein uS9 family.

This Salinispora tropica (strain ATCC BAA-916 / DSM 44818 / JCM 13857 / NBRC 105044 / CNB-440) protein is Small ribosomal subunit protein uS9.